The following is a 376-amino-acid chain: Gibberellin 20 oxidase 4 (376 aa).

Positions 222–322 (DNESIFRLNY…RKTLAFFLCP (101 aa)) constitute a Fe2OG dioxygenase domain. Residues His247, Asp249, and His303 each contribute to the Fe cation site. Arg313 is an active-site residue.

It belongs to the iron/ascorbate-dependent oxidoreductase family. GA20OX subfamily. It depends on Fe(2+) as a cofactor. Requires L-ascorbate as cofactor. Expressed in roots. Detected in leaves, inflorescences and siliques, but not in stems and dry seeds.

It catalyses the reaction gibberellin A12 + 2 2-oxoglutarate + 3 O2 + H(+) = gibberellin A9 + 2 succinate + 3 CO2 + 2 H2O. The enzyme catalyses gibberellin A53 + 2 2-oxoglutarate + 3 O2 + H(+) = gibberellin A20 + 2 succinate + 3 CO2 + 2 H2O. It participates in plant hormone biosynthesis; gibberellin biosynthesis. Functionally, key oxidase enzyme in the biosynthesis of gibberellin that catalyzes the conversion of GA12 and GA53 to GA9 and GA20 respectively, via a three-step oxidation at C-20 of the GA skeleton. The protein is Gibberellin 20 oxidase 4 (GA20OX4) of Arabidopsis thaliana (Mouse-ear cress).